Here is a 448-residue protein sequence, read N- to C-terminus: Cysteine--tRNA ligase (448 aa).

Cys29 provides a ligand contact to Zn(2+). A 'HIGH' region motif is present at residues 31 to 41; sequence PTVYNYIHIGN. Zn(2+) contacts are provided by Cys212, His237, and Glu241. Positions 269–273 match the 'KMSKS' region motif; that stretch reads KMSKS. Lys272 provides a ligand contact to ATP.

Belongs to the class-I aminoacyl-tRNA synthetase family. As to quaternary structure, monomer. Zn(2+) serves as cofactor.

It is found in the cytoplasm. It catalyses the reaction tRNA(Cys) + L-cysteine + ATP = L-cysteinyl-tRNA(Cys) + AMP + diphosphate. This is Cysteine--tRNA ligase from Streptococcus equi subsp. zooepidemicus (strain MGCS10565).